A 242-amino-acid polypeptide reads, in one-letter code: Myogenic factor 6 (242 aa).

A disordered region spans residues Ser31–Leu63. Residues Asp93–Leu144 enclose the bHLH domain.

As to quaternary structure, efficient DNA binding requires dimerization with another bHLH protein.

It is found in the nucleus. Its function is as follows. Involved in muscle differentiation (myogenic factor). Induces fibroblasts to differentiate into myoblasts. Probable sequence specific DNA-binding protein. The polypeptide is Myogenic factor 6 (MYF6) (Sus scrofa (Pig)).